The primary structure comprises 90 residues: Phosphocarrier protein NPr (90 aa).

The 89-residue stretch at 2-90 (TQYRRVAIKN…ALFESGFDED (89 aa)) folds into the HPr domain. Residue H16 is the Pros-phosphohistidine intermediate of the active site.

It belongs to the HPr family.

The protein resides in the cytoplasm. Functionally, component of the phosphoenolpyruvate-dependent nitrogen-metabolic phosphotransferase system (nitrogen-metabolic PTS), that seems to be involved in regulating nitrogen metabolism. The phosphoryl group from phosphoenolpyruvate (PEP) is transferred to the phosphoryl carrier protein NPr by enzyme I-Ntr. Phospho-NPr then transfers it to EIIA-Ntr. Could function in the transcriptional regulation of sigma-54 dependent operons in conjunction with the NPr (PtsO) and EIIA-Ntr (PtsN) proteins. In Proteus mirabilis (strain HI4320), this protein is Phosphocarrier protein NPr (ptsO).